The following is a 496-amino-acid chain: Ribose import ATP-binding protein RbsA (496 aa).

2 consecutive ABC transporter domains span residues Ile-5–Ser-242 and Ser-252–Glu-496. Gly-37–Ser-44 is a binding site for ATP.

This sequence belongs to the ABC transporter superfamily. Ribose importer (TC 3.A.1.2.1) family. As to quaternary structure, the complex is composed of an ATP-binding protein (RbsA), two transmembrane proteins (RbsC) and a solute-binding protein (RbsB).

The protein resides in the cell membrane. The catalysed reaction is D-ribose(out) + ATP + H2O = D-ribose(in) + ADP + phosphate + H(+). Part of the ABC transporter complex RbsABC involved in ribose import. Responsible for energy coupling to the transport system. This chain is Ribose import ATP-binding protein RbsA, found in Bacillus cereus (strain ATCC 14579 / DSM 31 / CCUG 7414 / JCM 2152 / NBRC 15305 / NCIMB 9373 / NCTC 2599 / NRRL B-3711).